The following is a 131-amino-acid chain: Small ribosomal subunit protein uS8 (131 aa).

The protein belongs to the universal ribosomal protein uS8 family. Part of the 30S ribosomal subunit. Contacts proteins S5 and S12.

In terms of biological role, one of the primary rRNA binding proteins, it binds directly to 16S rRNA central domain where it helps coordinate assembly of the platform of the 30S subunit. In Bordetella parapertussis (strain 12822 / ATCC BAA-587 / NCTC 13253), this protein is Small ribosomal subunit protein uS8.